The primary structure comprises 119 residues: MAGTGKTVTRVDLCEAVYQKVGLSRTESSAFVELVLKEITDCLERGETVKLSSFGSFMVRKKGQRIGRNPKTGTEVPISPRRVMVFKPSAILKQRINGQQANGKMNGESAPSEFSAETE.

The interval 96–119 (INGQQANGKMNGESAPSEFSAETE) is disordered.

Belongs to the bacterial histone-like protein family. In terms of assembly, heterodimer of an alpha and a beta chain.

Functionally, this protein is one of the two subunits of integration host factor, a specific DNA-binding protein that functions in genetic recombination as well as in transcriptional and translational control. The chain is Integration host factor subunit alpha from Bradyrhizobium sp. (strain ORS 278).